The chain runs to 213 residues: Receptor-binding cancer antigen expressed on SiSo cells (213 aa).

At 1–6 (MAITQF) the chain is on the extracellular side. A helical; Signal-anchor for type III membrane protein transmembrane segment spans residues 7-27 (RLFKVCTCLATVLSFLKRLIC). At 28–213 (RSGRGRKLSG…EQNKMGVKLS (186 aa)) the chain is on the cytoplasmic side. A Phosphoserine modification is found at S36. Position 41 is a phosphothreonine (T41). Position 94 is a phosphotyrosine (Y94). Residues 168–209 (QAEEVLRQQKIADREKRAAEQQRKKMEKEAQRLLKKEQNKMG) adopt a coiled-coil conformation. The span at 179-206 (ADREKRAAEQQRKKMEKEAQRLLKKEQN) shows a compositional bias: basic and acidic residues. The disordered stretch occupies residues 179-213 (ADREKRAAEQQRKKMEKEAQRLLKKEQNKMGVKLS).

As to quaternary structure, homodimer.

The protein resides in the golgi apparatus membrane. Functionally, may participate in suppression of cell proliferation and induces apoptotic cell death through activation of interleukin-1-beta converting enzyme (ICE)-like proteases. The sequence is that of Receptor-binding cancer antigen expressed on SiSo cells (Ebag9) from Rattus norvegicus (Rat).